We begin with the raw amino-acid sequence, 364 residues long: Developmentally-regulated GTP-binding protein 2 homolog (364 aa).

Residues 63–288 form the OBG-type G domain; the sequence is ARVALIGFPS…LLDKIWDYLN (226 aa). GTP is bound by residues 69 to 76, 115 to 119, and 246 to 249; these read GFPSVGKS, DTPGI, and NKMD. The region spanning 288–363 is the TGS domain; it reads NLVRVYTKLR…EDEDVIQIVK (76 aa).

This sequence belongs to the TRAFAC class OBG-HflX-like GTPase superfamily. OBG GTPase family.

This is Developmentally-regulated GTP-binding protein 2 homolog (drg2) from Dictyostelium discoideum (Social amoeba).